Consider the following 348-residue polypeptide: Putative zinc metalloprotease HP_0258 (348 aa).

H16 lines the Zn(2+) pocket. Residue E17 is part of the active site. Residue H20 participates in Zn(2+) binding. The next 5 helical transmembrane spans lie at 43–63 (CFFKLFGTQFALSLIPLGGYV), 93–113 (WILFGGAFFNFLFAILVYFFL), 247–267 (LIMGSSSVKELSGVVGIVGAL), 275–295 (MLLLFGAFLSINLGILNLLPI), and 324–344 (LWLAGVGFLVFIMFLGLFNDL). In terms of domain architecture, PDZ spans 106–175 (AILVYFFLAL…GELVLEIERN (70 aa)).

The protein belongs to the peptidase M50B family. Zn(2+) serves as cofactor.

It localises to the cell inner membrane. In Helicobacter pylori (strain ATCC 700392 / 26695) (Campylobacter pylori), this protein is Putative zinc metalloprotease HP_0258.